A 410-amino-acid polypeptide reads, in one-letter code: Peptidase T (410 aa).

A Zn(2+)-binding site is contributed by H79. D81 is an active-site residue. Residue D142 coordinates Zn(2+). Catalysis depends on E176, which acts as the Proton acceptor. E177, D199, and H381 together coordinate Zn(2+).

It belongs to the peptidase M20B family. The cofactor is Zn(2+).

It is found in the cytoplasm. It catalyses the reaction Release of the N-terminal residue from a tripeptide.. Functionally, cleaves the N-terminal amino acid of tripeptides. The chain is Peptidase T from Bacillus anthracis (strain A0248).